Reading from the N-terminus, the 804-residue chain is Probable phosphoketolase (804 aa).

Belongs to the XFP family. It depends on thiamine diphosphate as a cofactor.

The sequence is that of Probable phosphoketolase from Mycolicibacterium paratuberculosis (strain ATCC BAA-968 / K-10) (Mycobacterium paratuberculosis).